The sequence spans 102 residues: ATP-dependent Clp protease adapter protein ClpS (102 aa).

Belongs to the ClpS family. Binds to the N-terminal domain of the chaperone ClpA.

Its function is as follows. Involved in the modulation of the specificity of the ClpAP-mediated ATP-dependent protein degradation. The chain is ATP-dependent Clp protease adapter protein ClpS from Herminiimonas arsenicoxydans.